Here is a 313-residue protein sequence, read N- to C-terminus: Probable lysophospholipase L2 (313 aa).

Its subcellular location is the cell inner membrane. The catalysed reaction is a 1-acyl-sn-glycero-3-phosphocholine + H2O = sn-glycerol 3-phosphocholine + a fatty acid + H(+). The chain is Probable lysophospholipase L2 (pldB) from Haemophilus influenzae (strain ATCC 51907 / DSM 11121 / KW20 / Rd).